The chain runs to 65 residues: Toxin CsEM1 (65 aa).

An LCN-type CS-alpha/beta domain is found at 1 to 65 (KEGYLVNSYT…VWPLPNKTCN (65 aa)). Disulfide bonds link Cys12–Cys64, Cys16–Cys40, Cys25–Cys45, and Cys29–Cys47.

Belongs to the long (4 C-C) scorpion toxin superfamily. Sodium channel inhibitor family. Beta subfamily. Expressed by the venom gland.

It localises to the secreted. Beta toxins bind voltage-independently at site-4 of sodium channels (Nav) and shift the voltage of activation toward more negative potentials thereby affecting sodium channel activation and promoting spontaneous and repetitive firing. Highly potent. This Centruroides sculpturatus (Arizona bark scorpion) protein is Toxin CsEM1.